The chain runs to 477 residues: Glycogen synthase (477 aa).

ADP-alpha-D-glucose is bound at residue lysine 15.

This sequence belongs to the glycosyltransferase 1 family. Bacterial/plant glycogen synthase subfamily.

The catalysed reaction is [(1-&gt;4)-alpha-D-glucosyl](n) + ADP-alpha-D-glucose = [(1-&gt;4)-alpha-D-glucosyl](n+1) + ADP + H(+). It participates in glycan biosynthesis; glycogen biosynthesis. In terms of biological role, synthesizes alpha-1,4-glucan chains using ADP-glucose. This is Glycogen synthase from Klebsiella pneumoniae subsp. pneumoniae (strain ATCC 700721 / MGH 78578).